The following is a 241-amino-acid chain: MRLPIRFPKYVLYGMASAVWSILFLHILVGDTMSAADALSWSGGLIHSPAHRVNVMRSHHHEMGKELEQQHGAEEQQMQRDTKPAAFSNPPHLATGRGPSFVHADGQLDVSCFPHDKNIGSRTTEVAVVQVSSVQDCMKQCQSRPTCSHFTYNKNSKACHLKDGAPVFYTYNGDMTGPRSCDYSCTDNCWMNSETAVKALDYSGHGPGLCWAACKGTAGCIMYTFKGSTCTLYAKDSFNKS.

The first 34 residues, 1–34 (MRLPIRFPKYVLYGMASAVWSILFLHILVGDTMS), serve as a signal peptide directing secretion. Residues 35 to 103 (AADALSWSGG…ATGRGPSFVH (69 aa)) constitute a propeptide that is removed on maturation. Residues 61–83 (HEMGKELEQQHGAEEQQMQRDTK) show a composition bias toward basic and acidic residues. Residues 61–92 (HEMGKELEQQHGAEEQQMQRDTKPAAFSNPPH) form a disordered region. PAN domains are found at residues 112–181 (CFPH…PRSC) and 185–241 (CTDN…FNKS). Disulfide bonds link C112–C181, C137–C159, C141–C147, C185–C189, C210–C230, and C214–C220. A carbohydrate is bound at residue S121. Residues K162, Y169, and D174 each coordinate a carbohydrate.

Belongs to the microneme antigen family. As to quaternary structure, homodimer or heterodimer of major microneme antigen and microneme antigen. Contains six disulfide bonds.

Its subcellular location is the cytoplasmic vesicle. It is found in the secretory vesicle. The protein localises to the microneme. Its function is as follows. Galactose-binding lectin. Plays a role in adhesion to the host cell. Has a potential role in invasion of host cells. The protein is Microneme antigen of Sarcocystis muris.